The sequence spans 619 residues: Chaperone protein DnaK (619 aa).

Threonine 179 carries the post-translational modification Phosphothreonine; by autocatalysis. The tract at residues 584 to 619 is disordered; the sequence is QAKAQGAAGPQPGAQAQGQPNDGGKEDVVEAEVVDK. Over residues 585-605 the composition is skewed to low complexity; that stretch reads AKAQGAAGPQPGAQAQGQPND. Residues 606–619 are compositionally biased toward basic and acidic residues; that stretch reads GGKEDVVEAEVVDK.

The protein belongs to the heat shock protein 70 family.

Its function is as follows. Acts as a chaperone. This chain is Chaperone protein DnaK, found in Elusimicrobium minutum (strain Pei191).